The sequence spans 190 residues: Elongation factor P-like protein (190 aa).

Belongs to the elongation factor P family.

In Photorhabdus laumondii subsp. laumondii (strain DSM 15139 / CIP 105565 / TT01) (Photorhabdus luminescens subsp. laumondii), this protein is Elongation factor P-like protein.